Reading from the N-terminus, the 555-residue chain is Probable Xaa-Pro aminopeptidase BC1G_13431 (555 aa).

Positions 303, 314, 458, and 499 each coordinate Mn(2+). The interval 527–555 is disordered; it reads EGKEQEEEEEREANRKATESRKQKKTWFW. Residues 538-547 are compositionally biased toward basic and acidic residues; sequence EANRKATESR.

The protein belongs to the peptidase M24B family. It depends on Mn(2+) as a cofactor.

The enzyme catalyses Release of any N-terminal amino acid, including proline, that is linked to proline, even from a dipeptide or tripeptide.. In terms of biological role, catalyzes the removal of a penultimate prolyl residue from the N-termini of peptides. The polypeptide is Probable Xaa-Pro aminopeptidase BC1G_13431 (Botryotinia fuckeliana (strain B05.10) (Noble rot fungus)).